Here is a 128-residue protein sequence, read N- to C-terminus: Fluoride-specific ion channel FluC (128 aa).

The next 4 membrane-spanning stretches (helical) occupy residues 5 to 25 (IVAI…LSLA), 35 to 55 (LGTL…AVVF), 67 to 87 (LFVI…SVEV), and 96 to 116 (FGWA…LTAL). Gly75 and Thr78 together coordinate Na(+).

It belongs to the fluoride channel Fluc/FEX (TC 1.A.43) family.

It is found in the cell inner membrane. It catalyses the reaction fluoride(in) = fluoride(out). Its activity is regulated as follows. Na(+) is not transported, but it plays an essential structural role and its presence is essential for fluoride channel function. Functionally, fluoride-specific ion channel. Important for reducing fluoride concentration in the cell, thus reducing its toxicity. This is Fluoride-specific ion channel FluC from Burkholderia cenocepacia (strain HI2424).